The chain runs to 1649 residues: Cortactin-binding protein 2 (1649 aa).

The tract at residues 1 to 23 (MATDGASCEPDLSRAPEDAAGAA) is disordered. A coiled-coil region spans residues 119–276 (RKMQERMSAQ…EQLKRGSDSK (158 aa)). Disordered regions lie at residues 366-440 (IGVS…LHPG) and 454-478 (GNANDPDQNGNTTQSPPSRDVSPTS). Low complexity-rich tracts occupy residues 368-379 (VSVPAFPPSSAS) and 386-396 (PSTGSTPDPTS). Over residues 411 to 422 (QTPGITPQNSQA) the composition is skewed to polar residues. Arg-498 is subject to Asymmetric dimethylarginine. The tract at residues 499-616 (FTGPQAGAPP…SSPQLPPKPS (118 aa)) is disordered. Residues 583-593 (TVASPPSSLPQ) show a composition bias toward polar residues. 5 ANK repeats span residues 709–739 (GRPTLLQQAAAQGNVTLLSMLLNEEGLDINY), 743–772 (DGHSALYSAAKNGHTDCVRLLLSAEAQVNA), 776–805 (NGFTPLCAAAAQGHFKCVELLIAYDANINH), 809–838 (GGQTPLYLACKNGNKECIKLLLEAGTDRSV), and 842–871 (DGWTPVHAAVDTGNVDSLKLLMYHRVPAHG). Residues 872-897 (NSFSEEESESGVFDLDGGEESPEGKS) are disordered. The stretch at 912-942 (EGWTAAHIAASKGFKNCLEILCRHGGLETER) is one ANK 6 repeat. The tract at residues 1444–1482 (SCSKKKGESGAWRRVNTSPRRKSSRFSLPTWNKPDLSNE) is disordered. Ser-1524 is subject to Phosphoserine. The segment at 1616-1649 (PRSKVTQCSQNTKRSSSSSNTRQIEINNNSKEEN) is disordered. Positions 1624-1638 (SQNTKRSSSSSNTRQ) are enriched in low complexity. Polar residues predominate over residues 1639–1649 (IEINNNSKEEN).

Interacts with CTTN/cortactin SH3 domain. Interacts with STRN, STRN4/zinedin and MOB4/phocein; this interactions mediate the association with the STRIPAK core complex and may regulate dendritic spine distribution of the STRIPAK complex in hippocampal neurons. Activation of glutamate receptors weakens the interaction with STRN and STRN4.

It is found in the cytoplasm. It localises to the cell cortex. The protein localises to the cell projection. Its subcellular location is the dendritic spine. In terms of biological role, regulates the dendritic spine distribution of CTTN/cortactin in hippocampal neurons, and thus controls dendritic spinogenesis and dendritic spine maintenance. Associates with the striatin-interacting phosphatase and kinase (STRIPAK) core complex to regulate dendritic spine distribution of the STRIPAK complex in hippocampal neurons. The polypeptide is Cortactin-binding protein 2 (CTTNBP2) (Aotus nancymaae (Ma's night monkey)).